Here is a 274-residue protein sequence, read N- to C-terminus: Chemotaxis protein methyltransferase 1 (274 aa).

In terms of domain architecture, CheR-type methyltransferase spans 1 to 274 (MSAANADFEL…CSPGIIYRAK (274 aa)). S-adenosyl-L-methionine-binding positions include Asn-72, Thr-74, Arg-78, Glu-115, Asp-144, 200 to 201 (NL), and 217 to 218 (RN).

The enzyme catalyses L-glutamyl-[protein] + S-adenosyl-L-methionine = [protein]-L-glutamate 5-O-methyl ester + S-adenosyl-L-homocysteine. Methylation of the membrane-bound methyl-accepting chemotaxis proteins (MCP) to form gamma-glutamyl methyl ester residues in MCP. This is Chemotaxis protein methyltransferase 1 (cheR1) from Pseudomonas aeruginosa (strain ATCC 15692 / DSM 22644 / CIP 104116 / JCM 14847 / LMG 12228 / 1C / PRS 101 / PAO1).